Consider the following 528-residue polypeptide: G patch domain-containing protein 2 (528 aa).

Residues L36–D119 are disordered. Basic residues predominate over residues R63 to N77. Residues E98–S117 are compositionally biased toward basic and acidic residues. 4 positions are modified to phosphoserine: S115, S117, S146, and S195. Disordered regions lie at residues S232–E282 and G487–A528. A compositionally biased stretch (basic and acidic residues) spans N239–D252. Positions E467 to P513 constitute a G-patch domain. Residues K514 to A528 are compositionally biased toward polar residues.

Interacts with DHX15. In terms of tissue distribution, testis.

The protein localises to the nucleus speckle. Its subcellular location is the nucleus. The protein resides in the nucleolus. Functionally, enhances the ATPase activity of DHX15 in vitro. The chain is G patch domain-containing protein 2 (GPATCH2) from Homo sapiens (Human).